Reading from the N-terminus, the 136-residue chain is Ribosome-binding factor A (136 aa).

The protein belongs to the RbfA family. As to quaternary structure, monomer. Binds 30S ribosomal subunits, but not 50S ribosomal subunits or 70S ribosomes.

The protein resides in the cytoplasm. Functionally, one of several proteins that assist in the late maturation steps of the functional core of the 30S ribosomal subunit. Associates with free 30S ribosomal subunits (but not with 30S subunits that are part of 70S ribosomes or polysomes). Required for efficient processing of 16S rRNA. May interact with the 5'-terminal helix region of 16S rRNA. This chain is Ribosome-binding factor A, found in Rhodopseudomonas palustris (strain BisB5).